The following is an 80-amino-acid chain: Large ribosomal subunit protein eL38 (80 aa).

The protein belongs to the eukaryotic ribosomal protein eL38 family. Component of the large ribosomal subunit (LSU). Mature N.crassa ribosomes consist of a small (40S) and a large (60S) subunit. The 40S small subunit contains 1 molecule of ribosomal RNA (18S rRNA) and at least 32 different proteins. The large 60S subunit contains 3 rRNA molecules (26S, 5.8S and 5S rRNA) and at least 42 different proteins.

The protein resides in the cytoplasm. In terms of biological role, component of the ribosome, a large ribonucleoprotein complex responsible for the synthesis of proteins in the cell. The small ribosomal subunit (SSU) binds messenger RNAs (mRNAs) and translates the encoded message by selecting cognate aminoacyl-transfer RNA (tRNA) molecules. The large subunit (LSU) contains the ribosomal catalytic site termed the peptidyl transferase center (PTC), which catalyzes the formation of peptide bonds, thereby polymerizing the amino acids delivered by tRNAs into a polypeptide chain. The nascent polypeptides leave the ribosome through a tunnel in the LSU and interact with protein factors that function in enzymatic processing, targeting, and the membrane insertion of nascent chains at the exit of the ribosomal tunnel. This is Large ribosomal subunit protein eL38 (rpl-38) from Neurospora crassa (strain ATCC 24698 / 74-OR23-1A / CBS 708.71 / DSM 1257 / FGSC 987).